Reading from the N-terminus, the 92-residue chain is Small ribosomal subunit protein uS19c (92 aa).

The protein belongs to the universal ribosomal protein uS19 family.

It localises to the plastid. The protein resides in the chloroplast. Protein S19 forms a complex with S13 that binds strongly to the 16S ribosomal RNA. This chain is Small ribosomal subunit protein uS19c (rps19), found in Chlorella vulgaris (Green alga).